The chain runs to 332 residues: Probable ABC transporter permease protein YphD (332 aa).

Transmembrane regions (helical) follow at residues 28-48, 63-83, 84-104, 105-125, 131-151, 172-192, 222-242, 251-271, 278-298, and 303-323; these read GLLVVIAILYLVFSLNAPGFI, IGIAAWAMTLIIISGEIDVSV, GPMVAFVSVCLAFLLQFEVPL, AVACLLVLLLGALMGTLAGVL, VPSFVATLGLWSALRGMGLFM, FLGVPVSALIMIVLFALFVFI, VRILIFTLSGLLAAVTGILLA, GAANGLEFDVIAAVVVGGTAL, LFGTLLGVLVITLIGNGLVLL, and FFQQVVRGVIIVVAVLANILL.

The protein belongs to the binding-protein-dependent transport system permease family. AraH/RbsC subfamily.

The protein resides in the cell inner membrane. Functionally, probably part of the binding-protein-dependent transport system YphDEF. Probably responsible for the translocation of the substrate across the membrane. The polypeptide is Probable ABC transporter permease protein YphD (yphD) (Escherichia coli (strain K12)).